The sequence spans 50 residues: Defensin-like protein 1 (50 aa).

Cystine bridges form between C3-C50, C14-C35, C20-C44, and C24-C46.

This sequence belongs to the DEFL family.

The protein localises to the secreted. Its function is as follows. Possesses antimicrobial activity sensitive to inorganic cations. Has no inhibitory effect on insect gut alpha-amylase. Induces potential changes in fungal membranes and increased K+ efflux and Ca(2+) uptake. Interacts with sphingolipids and ergosterols found in fungal plasma membranes. In Dahlia merckii (Bedding dahlia), this protein is Defensin-like protein 1.